The following is a 521-amino-acid chain: Probable protein kinase UbiB (521 aa).

The 379-residue stretch at 119–497 (QFDETPIASA…QKRTNRLLQT (379 aa)) folds into the Protein kinase domain. ATP is bound by residues 125-133 (IASASIAQV) and lysine 151. Aspartate 286 serves as the catalytic Proton acceptor. The chain crosses the membrane as a helical span at residues 496 to 516 (QTIIYGGIGFVLGLLAMQLLV).

This sequence belongs to the ABC1 family. UbiB subfamily.

It is found in the cell inner membrane. Its pathway is cofactor biosynthesis; ubiquinone biosynthesis [regulation]. Is probably a protein kinase regulator of UbiI activity which is involved in aerobic coenzyme Q (ubiquinone) biosynthesis. The chain is Probable protein kinase UbiB from Variovorax paradoxus (strain S110).